The chain runs to 384 residues: uncharacterized protein (384 aa).

This is an uncharacterized protein from Nostoc sp. (strain PCC 7120 / SAG 25.82 / UTEX 2576).